The chain runs to 328 residues: Malate dehydrogenase (328 aa).

12 to 18 is an NAD(+) binding site; sequence GAAGQIG. Substrate is bound by residues R95 and R101. NAD(+)-binding positions include N108, Q115, and 132 to 134; that span reads VGN. Positions 134 and 165 each coordinate substrate. Residue H190 is the Proton acceptor of the active site.

Belongs to the LDH/MDH superfamily. MDH type 2 family.

It carries out the reaction (S)-malate + NAD(+) = oxaloacetate + NADH + H(+). Catalyzes the reversible oxidation of malate to oxaloacetate. The protein is Malate dehydrogenase of Polaromonas naphthalenivorans (strain CJ2).